Consider the following 252-residue polypeptide: 5'-nucleotidase SurE (252 aa).

A divalent metal cation is bound by residues Asp8, Asp9, Ser39, and Asn91.

The protein belongs to the SurE nucleotidase family. A divalent metal cation is required as a cofactor.

Its subcellular location is the cytoplasm. The catalysed reaction is a ribonucleoside 5'-phosphate + H2O = a ribonucleoside + phosphate. Its function is as follows. Nucleotidase that shows phosphatase activity on nucleoside 5'-monophosphates. This chain is 5'-nucleotidase SurE, found in Gemmatimonas aurantiaca (strain DSM 14586 / JCM 11422 / NBRC 100505 / T-27).